A 193-amino-acid chain; its full sequence is Probable thymidylate kinase (193 aa).

Gly7 to Thr14 is an ATP binding site.

This sequence belongs to the thymidylate kinase family.

It carries out the reaction dTMP + ATP = dTDP + ADP. This is Probable thymidylate kinase (tmk) from Thermoplasma acidophilum (strain ATCC 25905 / DSM 1728 / JCM 9062 / NBRC 15155 / AMRC-C165).